Reading from the N-terminus, the 248-residue chain is DNA repair protein RecO (248 aa).

This sequence belongs to the RecO family.

In terms of biological role, involved in DNA repair and RecF pathway recombination. In Chelativorans sp. (strain BNC1), this protein is DNA repair protein RecO.